The sequence spans 313 residues: Maintenance of mitochondrial morphology protein 1 (313 aa).

Topologically, residues 1–12 (MIHLPQGSFTQG) are lumenal. A helical transmembrane segment spans residues 13–33 (LIVGQLLTLAIIYVFLRFFLF). Residues 34 to 313 (CSPIPKSVAN…APQEESSNED (280 aa)) are Cytoplasmic-facing. Positions 42–63 (ANSPKQTGNETPDETPSTPLSN) are enriched in polar residues. A disordered region spans residues 42-65 (ANSPKQTGNETPDETPSTPLSNNK). Residues 90–288 (EPESLDWFNV…SPQFQQIAIP (199 aa)) form the SMP-LTD domain.

This sequence belongs to the MMM1 family. As to quaternary structure, homodimer. Component of the ER-mitochondria encounter structure (ERMES) or MDM complex, composed of mmm1, mdm10, mdm12 and mdm34. A mmm1 homodimer associates with one molecule of mdm12 on each side in a pairwise head-to-tail manner, and the SMP-LTD domains of mmm1 and mdm12 generate a continuous hydrophobic tunnel for phospholipid trafficking.

It localises to the endoplasmic reticulum membrane. Functionally, component of the ERMES/MDM complex, which serves as a molecular tether to connect the endoplasmic reticulum (ER) and mitochondria. Components of this complex are involved in the control of mitochondrial shape and protein biogenesis, and function in nonvesicular lipid trafficking between the ER and mitochondria. The mdm12-mmm1 subcomplex functions in the major beta-barrel assembly pathway that is responsible for biogenesis of all outer membrane beta-barrel proteins, and acts in a late step after the SAM complex. The mdm10-mdm12-mmm1 subcomplex further acts in the TOM40-specific pathway after the action of the mdm12-mmm1 complex. Essential for establishing and maintaining the structure of mitochondria and maintenance of mtDNA nucleoids. The protein is Maintenance of mitochondrial morphology protein 1 of Schizosaccharomyces pombe (strain 972 / ATCC 24843) (Fission yeast).